Reading from the N-terminus, the 466-residue chain is Muscarinic acetylcholine receptor M2 (466 aa).

At 1–22 (MNNSTNSSNNSLALTSPYKTFE) the chain is on the extracellular side. 4 N-linked (GlcNAc...) asparagine glycosylation sites follow: Asn-2, Asn-3, Asn-6, and Asn-9. Residues 23–45 (VVFIVLVAGSLSLVTIIGNILVM) traverse the membrane as a helical segment. The Cytoplasmic portion of the chain corresponds to 46-59 (VSIKVNRHLQTVNN). Residues 60–80 (YFLFSLACADLIIGVFSMNLY) traverse the membrane as a helical segment. Topologically, residues 81 to 97 (TLYTVIGYWPLGPVVCD) are extracellular. Residues Cys-96 and Cys-176 are joined by a disulfide bond. The chain crosses the membrane as a helical span at residues 98 to 119 (LWLALDYVVSNASVMNLLIISF). The Important for signaling signature appears at 120–122 (DRY). Residues 120–139 (DRYFCVTKPLTYPVKRTTKM) lie on the Cytoplasmic side of the membrane. The helical transmembrane segment at 140-162 (AGMMIAAAWVLSFILWAPAILFW) threads the bilayer. The Extracellular portion of the chain corresponds to 163–184 (QFIVGVRTVEDGECYIQFFSNA). The helical transmembrane segment at 185-209 (AVTFGTAIAAFYLPVIIMTVLYWHI) threads the bilayer. The Cytoplasmic portion of the chain corresponds to 210–387 (SRASKSRIKK…PPSREKKVTR (178 aa)). Residues 218–355 (KKDKKEPVAN…VVGSSGQNGD (138 aa)) form a disordered region. Phosphoserine is present on Ser-232. The segment covering 254–270 (GLEHNKIQNGKAPRDPV) has biased composition (basic and acidic residues). Polar residues-rich tracts occupy residues 284 to 293 (NDSTSVSAVA), 304 to 313 (DENTVSTSLG), and 334 to 353 (SDSC…SGQN). The helical transmembrane segment at 388-410 (TILAILLAFIITWAPYNVMVLIN) threads the bilayer. Over 411 to 418 (TFCAPCIP) the chain is Extracellular. Cys-413 and Cys-416 are joined by a disulfide. The helical transmembrane segment at 419–442 (NTVWTIGYWLCYINSTINPACYAL) threads the bilayer. Residues 436-440 (NPACY) carry the Important for signaling motif. Over 443–466 (CNATFKKTFKHLLMCHYKNIGATR) the chain is Cytoplasmic. Phosphothreonine occurs at positions 446, 450, and 465.

This sequence belongs to the G-protein coupled receptor 1 family. Muscarinic acetylcholine receptor subfamily. CHRM2 sub-subfamily. In terms of assembly, interacts with ARRB1 and ARRB2. Interacts with RACK1; the interaction regulates CHRM2 internalization. Post-translationally, phosphorylated in response to agonist treatment.

Its subcellular location is the cell membrane. The protein resides in the postsynaptic cell membrane. The muscarinic acetylcholine receptor mediates various cellular responses, including inhibition of adenylate cyclase, breakdown of phosphoinositides and modulation of potassium channels through the action of G proteins. Primary transducing effect is adenylate cyclase inhibition. Signaling promotes phospholipase C activity, leading to the release of inositol trisphosphate (IP3); this then triggers calcium ion release into the cytosol. This Homo sapiens (Human) protein is Muscarinic acetylcholine receptor M2 (CHRM2).